Reading from the N-terminus, the 467-residue chain is Sexual differentiation process putative subtilase-type proteinase isp6 (467 aa).

Positions 86–176 (YIIVLQPDLS…AVERDQVVSI (91 aa)) constitute an Inhibitor I9 domain. The 282-residue stretch at 186–467 (PWGLARISHK…NLLAFNGAQE (282 aa)) folds into the Peptidase S8 domain. Residues aspartate 221, histidine 253, and serine 409 each act as charge relay system in the active site.

The protein belongs to the peptidase S8 family.

This chain is Sexual differentiation process putative subtilase-type proteinase isp6 (isp6), found in Schizosaccharomyces pombe (strain 972 / ATCC 24843) (Fission yeast).